A 418-amino-acid chain; its full sequence is Tyrosine--tRNA ligase (418 aa).

Tyr-34 lines the L-tyrosine pocket. The 'HIGH' region motif lies at 39–48 (PTADSLHLGH). The L-tyrosine site is built by Tyr-169 and Gln-173. The 'KMSKS' region motif lies at 229-233 (KFGKS). An ATP-binding site is contributed by Lys-232. Residues 352-418 (NNIVELLVSS…GKKKYFVLTY (67 aa)) enclose the S4 RNA-binding domain.

Belongs to the class-I aminoacyl-tRNA synthetase family. TyrS type 1 subfamily. As to quaternary structure, homodimer.

It is found in the cytoplasm. It catalyses the reaction tRNA(Tyr) + L-tyrosine + ATP = L-tyrosyl-tRNA(Tyr) + AMP + diphosphate + H(+). Its function is as follows. Catalyzes the attachment of tyrosine to tRNA(Tyr) in a two-step reaction: tyrosine is first activated by ATP to form Tyr-AMP and then transferred to the acceptor end of tRNA(Tyr). In Streptococcus pneumoniae serotype 19F (strain G54), this protein is Tyrosine--tRNA ligase.